We begin with the raw amino-acid sequence, 1157 residues long: ATP-dependent helicase/deoxyribonuclease subunit B (1157 aa).

The UvrD-like helicase ATP-binding domain occupies 1–278 (MTLQIIAGRS…FFLENKRAKT (278 aa)). ATP is bound at residue 8 to 15 (GRSGTGKT). Positions 272–590 (ENKRAKTESL…VLSDMENAKL (319 aa)) constitute a UvrD-like helicase C-terminal domain. [4Fe-4S] cluster contacts are provided by cysteine 794, cysteine 1115, cysteine 1118, and cysteine 1124.

The protein belongs to the helicase family. AddB/RexB type 1 subfamily. Heterodimer of AddA and AddB. The cofactor is Mg(2+). Requires [4Fe-4S] cluster as cofactor.

In terms of biological role, the heterodimer acts as both an ATP-dependent DNA helicase and an ATP-dependent, dual-direction single-stranded exonuclease. Recognizes the chi site generating a DNA molecule suitable for the initiation of homologous recombination. The AddB subunit has 5' -&gt; 3' nuclease activity but not helicase activity. This Listeria monocytogenes serotype 4a (strain HCC23) protein is ATP-dependent helicase/deoxyribonuclease subunit B.